Reading from the N-terminus, the 845-residue chain is MVVVACPNSSLVEAQMDADRSGSCSKYDYASAYSRLRSAARAAGTGVSSVLILSSPDVDSVCATRILTSLLLQDDIAHRIVPVEGYRTLLNTLSTVFAPHDNDNASSSSSSTTDVKSVVFINLGAVLSLPTTFNIPPSCTIHVIDSHRPWNLENLFATSHANDSVWCWDDGEIATKLCRQGGERDAFEKLEFDVDSDSESDSDSHSDSHSDSVSDPEDASDSNDSGSDSARSHDERQRDGSGGKRKRGSHSPLSRRRQRHKQGQRHKPRHRSTSASATRLTNAERHRYRNILTRYYARGESFGMSVSSMLYLLCESLGRADRESLWLAIVGLTSLYLSNNIDLETYETYSAAYASEVIAIEPTSSNAPTEAWSLDLLTNANNNAQEQAARSATATATGAARAQNRAVRSVISKNTKAEDADDRSIRIVGSELRLTLYRHWSLETAMYHTAYVAAKLGIWRERGLSKLRGLMAKMGFSLTAVRQNYTHMPLDLRRSLVRKLEAIAPEYGLTQLTYRGFERSLGFRTAPLGAADVVEGVSALLIGAHGIKIEVDTPGMVFASSSTTPLGNSFGANLNPANPNAQTSELFATKRVWNLGTALTDSITSAIGAATGNAWSNDQTEANGGLHVDVSSTQPALAAVASVQDVGALERAERRVATSNFYEAYRALDFSRSTSVDLLRSSVLLSEALHRKIVARGISLITNQSIRTLKNFRLAILRDGADLELFTHVDVLARLADWLTTSLRDIIVQQQASTNAQRKKQPAASTRLPFILAALHRAKDTFLVLGSTASAIDGVVQHNHFTAAFQHAASVSRARVRHDHFRTCSIHVRTSDLAAFVENVHLKIK.

Positions 193-283 (DVDSDSESDS…SASATRLTNA (91 aa)) are disordered. Composition is skewed to basic and acidic residues over residues 202 to 212 (SDSHSDSHSDS) and 230 to 242 (ARSH…DGSG). Residues 243–272 (GKRKRGSHSPLSRRRQRHKQGQRHKPRHRS) show a composition bias toward basic residues.

It belongs to the CDC45 family.

It is found in the nucleus. In terms of biological role, temperature-sensitive protein required for DNA synthesis. May be a transcription factor that regulates the level or influences the stability of DNA polymerases or auxiliary proteins. The chain is Protein TSD2 (TSD2) from Mycosarcoma maydis (Corn smut fungus).